The following is a 293-amino-acid chain: AKT-interacting protein (293 aa).

Over residues 1–11 the composition is skewed to polar residues; it reads MNPFWSMSTSS. The tract at residues 1–63 is disordered; the sequence is MNPFWSMSTS…TSPAPAAQST (63 aa). Residues 14–23 show a composition bias toward basic and acidic residues; the sequence is KRSEGEEKTL. Ser-30 is modified (phosphoserine). Residues 74–222 form the UBC core domain; the sequence is YLEYSLLAEF…VVDSVQVCTA (149 aa). A compositionally biased stretch (basic and acidic residues) spans 253 to 265; that stretch reads MLTQKKKPEEQHN. Positions 253–293 are disordered; the sequence is MLTQKKKPEEQHNKSVHVAGLSWVKPGSVQPFSKEEKTVAT.

Belongs to the ubiquitin-conjugating enzyme family. FTS subfamily. Component of the FTS/Hook/FHIP complex (FHF complex), composed of AKTIP/FTS, FHIP1B, and one or more members of the Hook family of proteins HOOK1, HOOK2, and HOOK3. Interacts directly with HOOK1, HOOK2 and HOOK3. The FHF complex associates with the homotypic vesicular sorting complex (the HOPS complex). Also interacts with AKT1. May interact with FHIP1A.

It is found in the cytoplasm. The protein resides in the cell membrane. Functionally, component of the FTS/Hook/FHIP complex (FHF complex). The FHF complex may function to promote vesicle trafficking and/or fusion via the homotypic vesicular protein sorting complex (the HOPS complex). Regulates apoptosis by enhancing phosphorylation and activation of AKT1. Increases release of TNFSF6 via the AKT1/GSK3B/NFATC1 signaling cascade. FHF complex promotes the distribution of AP-4 complex to the perinuclear area of the cell. This is AKT-interacting protein (AKTIP) from Pongo abelii (Sumatran orangutan).